The chain runs to 431 residues: 23S rRNA (uracil(1939)-C(5))-methyltransferase RlmD (431 aa).

The TRAM domain maps to 10-68; that stretch reads RVTTRQIITVKVNDLDSFGQGVARHNGKALFIPGLLPEESAEVIITEDKKQFARARVSR. [4Fe-4S] cluster-binding residues include C81, C87, C90, and C161. The S-adenosyl-L-methionine site is built by Q264, F293, N298, E314, N341, and D362. Residue C388 is the Nucleophile of the active site.

The protein belongs to the class I-like SAM-binding methyltransferase superfamily. RNA M5U methyltransferase family. RlmD subfamily.

It catalyses the reaction uridine(1939) in 23S rRNA + S-adenosyl-L-methionine = 5-methyluridine(1939) in 23S rRNA + S-adenosyl-L-homocysteine + H(+). Its function is as follows. Catalyzes the formation of 5-methyl-uridine at position 1939 (m5U1939) in 23S rRNA. The chain is 23S rRNA (uracil(1939)-C(5))-methyltransferase RlmD from Salmonella choleraesuis (strain SC-B67).